Consider the following 194-residue polypeptide: Large ribosomal subunit protein eL15 (194 aa).

A disordered region spans residues 162–194; sequence LTSAGRKSRGLRNKGKGAEKVRPSVRANKGKTK. Residues 167-176 are compositionally biased toward basic residues; the sequence is RKSRGLRNKG.

Belongs to the eukaryotic ribosomal protein eL15 family.

This Thermococcus onnurineus (strain NA1) protein is Large ribosomal subunit protein eL15.